A 332-amino-acid chain; its full sequence is Phosphate acetyltransferase (332 aa).

The protein belongs to the phosphate acetyltransferase and butyryltransferase family.

The protein resides in the cytoplasm. It catalyses the reaction acetyl-CoA + phosphate = acetyl phosphate + CoA. The protein operates within metabolic intermediate biosynthesis; acetyl-CoA biosynthesis; acetyl-CoA from acetate: step 2/2. The polypeptide is Phosphate acetyltransferase (pta) (Acetivibrio thermocellus (strain ATCC 27405 / DSM 1237 / JCM 9322 / NBRC 103400 / NCIMB 10682 / NRRL B-4536 / VPI 7372) (Clostridium thermocellum)).